A 449-amino-acid chain; its full sequence is MREIISLNVGQAGCQIANSCWELYCLEHGIQPDGYLTEERKAADPDHGFSTFFSETGNGKYVPRTIYADLEPNVIDEVRTGAYRGLFHPEHMISGKEDASNNYARGHYTVGKELIDQVLDKVRRVADNCSGLQGFLVFHSFGGGTGSGFGALLMERLSVDYGKKSKLEFCVYPAPQTATSVVEPYNSILTTHTTLEHADCSFMVDNEAIYDICRRNLGLERPNYENLNRLIAQVVSSITASLRFDGSLNVDLNEFQTNLVPYPRIHFPLVAYAPVISAAKAAHEANSVQEMTMSCFEPNNQMVKCDPRHGKYMATCLLYRGDVVPNDAHAAVATLKTKRTIQFVDWCPTGFKLGICYQPPHQVPNGDLAKVNRAVCMLSNTTAIAEAWSALSSKFDLMYSKRAFVHWYVGEGMEEGEFSEAREDLAALERDYEEVAADSMEGEEVEAEY.

GTP is bound by residues Gln11, Glu71, Ser140, Gly144, Thr145, Thr179, Asn206, and Asn228. Glu71 is a binding site for Mg(2+). The active site involves Glu254.

Belongs to the tubulin family. Dimer of alpha and beta chains. A typical microtubule is a hollow water-filled tube with an outer diameter of 25 nm and an inner diameter of 15 nM. Alpha-beta heterodimers associate head-to-tail to form protofilaments running lengthwise along the microtubule wall with the beta-tubulin subunit facing the microtubule plus end conferring a structural polarity. Microtubules usually have 13 protofilaments but different protofilament numbers can be found in some organisms and specialized cells. Mg(2+) serves as cofactor.

The protein localises to the cytoplasm. Its subcellular location is the cytoskeleton. It carries out the reaction GTP + H2O = GDP + phosphate + H(+). Tubulin is the major constituent of microtubules, a cylinder consisting of laterally associated linear protofilaments composed of alpha- and beta-tubulin heterodimers. Microtubules grow by the addition of GTP-tubulin dimers to the microtubule end, where a stabilizing cap forms. Below the cap, tubulin dimers are in GDP-bound state, owing to GTPase activity of alpha-tubulin. In Sordaria macrospora (strain ATCC MYA-333 / DSM 997 / K(L3346) / K-hell), this protein is Tubulin alpha chain (TUBA).